Here is a 510-residue protein sequence, read N- to C-terminus: MEFTENYNPKNKPIMVLGTSSGAGKSLTVTAICRILKKLGEEPIPFKGQNMSNNAWVDSNGGEMAYSQALQAFSCGINPSSEMNPILLKPQGDSTSEVIHLGKSVGISTAKDYYKDWFMPGWEVIKKSINIIYEKNKNCRLIIEGAGSPVEMNLIHRDLTNLRVAKYLDASCILVTDIERGGVFAQIIGTLELMKPEERKLIKGILINRFRGDLSLFKEGKKWIEDKTKIPVLGIIPWLNDKFPPEDSLDLLERKSYLSNPEIKVGIIKLPSISNFSDFDPLENENSILIEWISEAQNLNQFDFIIIPGSKQTIKDQLFLNESGLSKEIKNYSHNNGNIFGICGGLQMLGTVLEDPFFKEGSNFNSDQSIKGIGLLPLKTTFLKHKITRQIHSESIWPNSTKIIGFEIHNGITKLDSSHLDTLKTNHIFKDFDLGWYKENREGGTIAGTYIHGIFENDEWRDHYINLIRKTKNKLTLDKKSRSYKMKRESIINNLANEFNNHFNISLLLN.

The GATase cobBQ-type domain maps to 262-460; that stretch reads EIKVGIIKLP…IHGIFENDEW (199 aa). The active-site Nucleophile is C343. Residue H452 is part of the active site.

Belongs to the CobB/CobQ family. CobQ subfamily.

It participates in cofactor biosynthesis; adenosylcobalamin biosynthesis. Functionally, catalyzes amidations at positions B, D, E, and G on adenosylcobyrinic A,C-diamide. NH(2) groups are provided by glutamine, and one molecule of ATP is hydrogenolyzed for each amidation. The protein is Cobyric acid synthase of Prochlorococcus marinus (strain MIT 9515).